A 132-amino-acid polypeptide reads, in one-letter code: Translation initiation factor 2 subunit beta (132 aa).

The disordered stretch occupies residues 1 to 30 (MDYEEQLDRAMDEKPDVTGSETRFEVPDPN).

Belongs to the eIF-2-beta/eIF-5 family. In terms of assembly, heterotrimer composed of an alpha, a beta and a gamma chain.

In terms of biological role, eIF-2 functions in the early steps of protein synthesis by forming a ternary complex with GTP and initiator tRNA. This Halobacterium salinarum (strain ATCC 29341 / DSM 671 / R1) protein is Translation initiation factor 2 subunit beta.